Reading from the N-terminus, the 201-residue chain is Probable molybdenum cofactor guanylyltransferase (201 aa).

GTP contacts are provided by residues 16 to 18 (LAG), lysine 28, aspartate 75, and aspartate 107. Position 107 (aspartate 107) interacts with Mg(2+).

Belongs to the MobA family. Requires Mg(2+) as cofactor.

The protein localises to the cytoplasm. It carries out the reaction Mo-molybdopterin + GTP + H(+) = Mo-molybdopterin guanine dinucleotide + diphosphate. Its function is as follows. Transfers a GMP moiety from GTP to Mo-molybdopterin (Mo-MPT) cofactor (Moco or molybdenum cofactor) to form Mo-molybdopterin guanine dinucleotide (Mo-MGD) cofactor. The protein is Probable molybdenum cofactor guanylyltransferase of Mycobacterium bovis (strain ATCC BAA-935 / AF2122/97).